Reading from the N-terminus, the 1431-residue chain is Probable ATP-dependent RNA helicase spindle-E (1431 aa).

A Helicase ATP-binding domain is found at 127–294 (LAAIRENPVV…FAMSSSLPPV (168 aa)). 140–147 (GETGCGKT) contributes to the ATP binding site. The short motif at 240-243 (DEVH) is the DEAH box element. Positions 354–526 (QSQQSYEEAK…NSVLKAKELE (173 aa)) constitute a Helicase C-terminal domain. Residues 937-1000 (AKAVTKGLQL…RLMSPQLKRD (64 aa)) form the Tudor domain.

Belongs to the DEAD box helicase family. DEAH subfamily.

It localises to the cytoplasm. The catalysed reaction is ATP + H2O = ADP + phosphate + H(+). Functionally, probable ATP-binding RNA helicase which plays a central role during spermatogenesis and oogenesis by repressing transposable elements and preventing their mobilization, which is essential for the germline integrity. Acts via the piRNA metabolic process, which mediates the repression of transposable elements during meiosis by forming complexes composed of piRNAs and Piwi and govern the methylation and subsequent repression of transposons. Involved in the repression of LTR retrotransposon copia. Also involved in telomere regulation by repressing specialized telomeric retroelements HeT-A, TAHRE, and TART; Drosophila telomeres being maintained by transposition of specialized telomeric retroelements. Involved in telomeric trans-silencing, a repression mechanism by which a transposon or a transgene inserted in subtelomeric heterochromatin has the capacity to repress in trans in the female germline, a homologous transposon, or transgene located in euchromatin. Involved in the repression of testis-expressed Stellate genes by the homologous Su(Ste) repeats. Required for anteroposterior and dorsoventral axis formation during oogenesis. In Drosophila mojavensis (Fruit fly), this protein is Probable ATP-dependent RNA helicase spindle-E (spn-E).